Consider the following 694-residue polypeptide: Outer dynein arm-docking complex subunit 1 (694 aa).

Coiled-coil stretches lie at residues E27 to N192 and R222 to Q259. The tract at residues R271–E290 is disordered. Residues N339–L418 adopt a coiled-coil conformation. Disordered stretches follow at residues Q531 to S550 and S571 to N694. A phosphoserine mark is found at S536, S542, S543, and S545. Over residues T628–T642 the composition is skewed to low complexity. Polar residues predominate over residues S655–Q672. Low complexity predominate over residues T673–S687.

Belongs to the ODA1/DCC2 family. Component of the outer dynein arm-docking complex along with ODAD2, ODAD3, ODAD4 and CLXN. Interacts with ODAD3. Interacts with ODAD4; this interaction may facilitate the recruitment and/or attachment of outer dynein arm docking complex proteins,including ODAD1, ODAD3, and ODAD4 to ciliary axonemes. Interacts with DNAH9. Interacts with MNS1. Interacts with PIERCE1 and PIERCE2; the interactions link the outer dynein arms docking complex (ODA-DC) to the internal microtubule inner proteins (MIP) in cilium axoneme.

It localises to the cytoplasm. It is found in the cytoskeleton. The protein resides in the cilium axoneme. In terms of biological role, component of the outer dynein arm-docking complex that mediates outer dynein arms (ODA) binding onto the doublet microtubule. Involved in mediating assembly of both ODAs and their axonemal docking complex onto ciliary microtubules. The polypeptide is Outer dynein arm-docking complex subunit 1 (Odad1) (Rattus norvegicus (Rat)).